Consider the following 591-residue polypeptide: Probable LRR receptor-like serine/threonine-protein kinase At1g69990 (591 aa).

A signal peptide spans 1–18 (MKTISIFFVIILMSSSHA). The Extracellular portion of the chain corresponds to 19 to 218 (EDDVLCLKGF…GKNLTIIVTA (200 aa)). Asn46 carries an N-linked (GlcNAc...) asparagine glycan. 5 LRR repeats span residues 66-88 (RILSLQLQSMQLSGQIPESLKLC), 90-111 (SLQSLDLSFNDFSGLIPSQICS), 115-137 (YLVTLDLSGNKLSGSIPSQIVDC), 139-162 (FLNSLALNQNKLTGSIPSELTRLN), and 163-185 (RLQRLSLADNDLSGSIPSELSHY). The N-linked (GlcNAc...) asparagine glycan is linked to Asn211. Residues 219-239 (GVIGAVGSLCVGFGMFWWFFI) form a helical membrane-spanning segment. At 240–591 (RDRRKMNNYG…LIFNKQEHLK (352 aa)) the chain is on the cytoplasmic side. Position 292 is a phosphothreonine (Thr292). Residues 295-573 (FDSGNIVVSS…KNLGDQHGFF (279 aa)) enclose the Protein kinase domain. ATP is bound by residues 301-309 (VVSSRSGVS) and Lys323. Phosphoserine is present on Ser378. A Phosphothreonine modification is found at Thr389. A Phosphotyrosine modification is found at Tyr463. Ser465 is subject to Phosphoserine. A Phosphothreonine modification is found at Thr466. Ser470 carries the phosphoserine modification.

It belongs to the protein kinase superfamily. Ser/Thr protein kinase family.

The protein localises to the membrane. The catalysed reaction is L-seryl-[protein] + ATP = O-phospho-L-seryl-[protein] + ADP + H(+). The enzyme catalyses L-threonyl-[protein] + ATP = O-phospho-L-threonyl-[protein] + ADP + H(+). This chain is Probable LRR receptor-like serine/threonine-protein kinase At1g69990, found in Arabidopsis thaliana (Mouse-ear cress).